The sequence spans 457 residues: Siroheme synthase (457 aa).

A precorrin-2 dehydrogenase /sirohydrochlorin ferrochelatase region spans residues M1–T204. NAD(+) is bound by residues D22–V23 and L43–T44. Phosphoserine is present on S128. The segment at G216–Y457 is uroporphyrinogen-III C-methyltransferase. P225 lines the S-adenosyl-L-methionine pocket. The active-site Proton acceptor is D248. K270 acts as the Proton donor in catalysis. S-adenosyl-L-methionine is bound by residues G301–D303, I306, T331–A332, M382, and G411.

It in the N-terminal section; belongs to the precorrin-2 dehydrogenase / sirohydrochlorin ferrochelatase family. The protein in the C-terminal section; belongs to the precorrin methyltransferase family.

The catalysed reaction is uroporphyrinogen III + 2 S-adenosyl-L-methionine = precorrin-2 + 2 S-adenosyl-L-homocysteine + H(+). It carries out the reaction precorrin-2 + NAD(+) = sirohydrochlorin + NADH + 2 H(+). It catalyses the reaction siroheme + 2 H(+) = sirohydrochlorin + Fe(2+). It functions in the pathway cofactor biosynthesis; adenosylcobalamin biosynthesis; precorrin-2 from uroporphyrinogen III: step 1/1. The protein operates within cofactor biosynthesis; adenosylcobalamin biosynthesis; sirohydrochlorin from precorrin-2: step 1/1. Its pathway is porphyrin-containing compound metabolism; siroheme biosynthesis; precorrin-2 from uroporphyrinogen III: step 1/1. It participates in porphyrin-containing compound metabolism; siroheme biosynthesis; siroheme from sirohydrochlorin: step 1/1. It functions in the pathway porphyrin-containing compound metabolism; siroheme biosynthesis; sirohydrochlorin from precorrin-2: step 1/1. Multifunctional enzyme that catalyzes the SAM-dependent methylations of uroporphyrinogen III at position C-2 and C-7 to form precorrin-2 via precorrin-1. Then it catalyzes the NAD-dependent ring dehydrogenation of precorrin-2 to yield sirohydrochlorin. Finally, it catalyzes the ferrochelation of sirohydrochlorin to yield siroheme. In Salmonella heidelberg (strain SL476), this protein is Siroheme synthase.